The primary structure comprises 290 residues: PIH1 domain-containing protein 1 (290 aa).

A phosphoserine mark is found at serine 12, serine 16, and serine 173.

The protein belongs to the PIH1 family. As to quaternary structure, component of the R2TP complex composed at least of RUVBL1, RUVBL2, RPAP3 and PIHD1. Component of the PAQosome complex which is responsible for the biogenesis of several protein complexes and which consists of R2TP complex members RUVBL1, RUVBL2, RPAP3 and PIH1D1, URI complex members PFDN2, PFDN6, PDRG1, UXT and URI1 as well as ASDURF, POLR2E and DNAAF10/WDR92. Interacts with phosphorylated TELO2. Mediates interaction of TELO2 with the R2TP complex. Interacts with phosphorylated ECD, EFTUD2/SNRP116, RPB1 and UBR5 and with RPB1 in a phosphorylation-independent manner. Interacts with the core C/D box snoRNP particle components NOP58 and FBL and with RUVBL1/TIP49. Interacts with RPAP3 and DNAAF10. Interacts with histone H4 and with SWI/SNF complex member SMARCB1/SNF5. Interacts with the mTORC1 complex member RPTOR. Interacts with isoform 1 of MSL1.

Its subcellular location is the nucleus. Its function is as follows. Involved in the assembly of C/D box small nucleolar ribonucleoprotein (snoRNP) particles. Recruits the SWI/SNF complex to the core promoter of rRNA genes and enhances pre-rRNA transcription. Mediates interaction of TELO2 with the R2TP complex which is necessary for the stability of MTOR and SMG1. Positively regulates the assembly and activity of the mTORC1 complex. The protein is PIH1 domain-containing protein 1 (Pih1d1) of Mus musculus (Mouse).